Reading from the N-terminus, the 66-residue chain is DNA gyrase inhibitor YacG (66 aa).

Positions 9, 12, 28, and 32 each coordinate Zn(2+). Residues 45 to 66 form a disordered region; that stretch reads HKIAGSQESEDELYSGDLEPRH.

It belongs to the DNA gyrase inhibitor YacG family. As to quaternary structure, interacts with GyrB. Requires Zn(2+) as cofactor.

Inhibits all the catalytic activities of DNA gyrase by preventing its interaction with DNA. Acts by binding directly to the C-terminal domain of GyrB, which probably disrupts DNA binding by the gyrase. This chain is DNA gyrase inhibitor YacG, found in Pseudomonas putida (strain W619).